The sequence spans 433 residues: Enolase (433 aa).

Gln-167 is a binding site for (2R)-2-phosphoglycerate. The Proton donor role is filled by Glu-209. Asp-246, Glu-291, and Asp-318 together coordinate Mg(2+). Residues Lys-343, Arg-372, Ser-373, and Lys-394 each contribute to the (2R)-2-phosphoglycerate site. Lys-343 functions as the Proton acceptor in the catalytic mechanism.

This sequence belongs to the enolase family. In terms of assembly, component of the RNA degradosome, a multiprotein complex involved in RNA processing and mRNA degradation. The cofactor is Mg(2+).

The protein resides in the cytoplasm. The protein localises to the secreted. It is found in the cell surface. The enzyme catalyses (2R)-2-phosphoglycerate = phosphoenolpyruvate + H2O. It participates in carbohydrate degradation; glycolysis; pyruvate from D-glyceraldehyde 3-phosphate: step 4/5. Catalyzes the reversible conversion of 2-phosphoglycerate (2-PG) into phosphoenolpyruvate (PEP). It is essential for the degradation of carbohydrates via glycolysis. This Vibrio vulnificus (strain YJ016) protein is Enolase.